The chain runs to 157 residues: Heavy metal-associated isoprenylated plant protein 16 (157 aa).

An HMA domain is found at 2 to 71; that stretch reads KQKILIRIAM…KVAFAELVSV (70 aa). Residues 73–115 form a disordered region; that stretch reads KVEPPKDGDKKPEEEKKPEEKKPEEKKPEEKKPEPCCQPWQKP. Over residues 75–106 the composition is skewed to basic and acidic residues; sequence EPPKDGDKKPEEEKKPEEKKPEEKKPEEKKPE. C154 bears the Cysteine methyl ester mark. C154 carries S-farnesyl cysteine lipidation. A propeptide spans 155-157 (removed in mature form); it reads RIM.

The protein belongs to the HIPP family.

Its function is as follows. Probable heavy-metal-binding protein. The sequence is that of Heavy metal-associated isoprenylated plant protein 16 from Arabidopsis thaliana (Mouse-ear cress).